The primary structure comprises 115 residues: uncharacterized protein (115 aa).

This is an uncharacterized protein from Schizosaccharomyces pombe (strain 972 / ATCC 24843) (Fission yeast).